The sequence spans 519 residues: Mannosyl-oligosaccharide alpha-1,2-mannosidase (519 aa).

An N-terminal signal peptide occupies residues 1 to 22 (MKGSPVLAVCAAALTLIPSVVA). Asn-187 carries N-linked (GlcNAc...) asparagine glycosylation. Cys-337 and Cys-366 are oxidised to a cystine. Glu-380 functions as the Proton donor in the catalytic mechanism. An N-linked (GlcNAc...) asparagine glycan is attached at Asn-443. Thr-507 contributes to the Ca(2+) binding site.

Belongs to the glycosyl hydrolase 47 family. As to quaternary structure, monomer. Requires Ca(2+) as cofactor. Mg(2+) serves as cofactor.

The protein localises to the secreted. It catalyses the reaction N(4)-(alpha-D-Man-(1-&gt;2)-alpha-D-Man-(1-&gt;2)-alpha-D-Man-(1-&gt;3)-[alpha-D-Man-(1-&gt;2)-alpha-D-Man-(1-&gt;3)-[alpha-D-Man-(1-&gt;2)-alpha-D-Man-(1-&gt;6)]-alpha-D-Man-(1-&gt;6)]-beta-D-Man-(1-&gt;4)-beta-D-GlcNAc-(1-&gt;4)-beta-D-GlcNAc)-L-asparaginyl-[protein] (N-glucan mannose isomer 9A1,2,3B1,2,3) + 4 H2O = N(4)-(alpha-D-Man-(1-&gt;3)-[alpha-D-Man-(1-&gt;3)-[alpha-D-Man-(1-&gt;6)]-alpha-D-Man-(1-&gt;6)]-beta-D-Man-(1-&gt;4)-beta-D-GlcNAc-(1-&gt;4)-beta-D-GlcNAc)-L-asparaginyl-[protein] (N-glucan mannose isomer 5A1,2) + 4 beta-D-mannose. It carries out the reaction N(4)-(alpha-D-Man-(1-&gt;2)-alpha-D-Man-(1-&gt;2)-alpha-D-Man-(1-&gt;3)-[alpha-D-Man-(1-&gt;3)-[alpha-D-Man-(1-&gt;2)-alpha-D-Man-(1-&gt;6)]-alpha-D-Man-(1-&gt;6)]-beta-D-Man-(1-&gt;4)-beta-D-GlcNAc-(1-&gt;4)-beta-D-GlcNAc)-L-asparaginyl-[protein] (N-glucan mannose isomer 8A1,2,3B1,3) + 3 H2O = N(4)-(alpha-D-Man-(1-&gt;3)-[alpha-D-Man-(1-&gt;3)-[alpha-D-Man-(1-&gt;6)]-alpha-D-Man-(1-&gt;6)]-beta-D-Man-(1-&gt;4)-beta-D-GlcNAc-(1-&gt;4)-beta-D-GlcNAc)-L-asparaginyl-[protein] (N-glucan mannose isomer 5A1,2) + 3 beta-D-mannose. It participates in protein modification; protein glycosylation. In terms of biological role, alpha-mannosidase involved in the maturation of Asn-linked oligosaccharides. Progressively trims alpha-1,2-linked mannose residues from Man(9)GlcNAc(2) to produce Man(5)GlcNAc(2). This Coccidioides posadasii (strain RMSCC 757 / Silveira) (Valley fever fungus) protein is Mannosyl-oligosaccharide alpha-1,2-mannosidase.